The sequence spans 331 residues: MKPKVFITRQIPENGIKMIEKFYEIELWKDPKAPPRGVLLEKVREVDALVTLVTDKVDKELLENAPKLKIIAQYAVGYDNIDIEEATKRGIYVTNTPGVLTDATADLAFALLLAVARRIVEADAFVRSGEWKKSEVGWHPLMFLGYGLKGKTLGIVGFGRIGQALAKRAKGFGMKIIYYSRTRKPEAEEEIGAEYVDFETLLKESDFISLHVPLTKETYHMIGEKELKLMKPNAILINTSRGAVVDTNALIKALKEGWIAGAGLDVFEEEPYYNEELFKLKNVVLAPHIGSATHEAREGMAELVAKNLIAFAKGEIPPNLVNKDVLTSSPP.

Residues 158–161 (FGRI), 180–182 (SRT), and 239–241 (TSR) each bind NADP(+). Active-site residues include Arg241 and Glu270. The active-site Proton donor is His288. 288–290 (HIG) serves as a coordination point for NADP(+).

This sequence belongs to the D-isomer specific 2-hydroxyacid dehydrogenase family. GyaR subfamily. As to quaternary structure, homodimer.

The protein localises to the cytoplasm. The catalysed reaction is glycolate + NAD(+) = glyoxylate + NADH + H(+). This is Glyoxylate reductase from Thermococcus litoralis (strain ATCC 51850 / DSM 5473 / JCM 8560 / NS-C).